A 955-amino-acid chain; its full sequence is Leucine--tRNA ligase (955 aa).

The 'HIGH' region motif lies at 51–61 (PYLNGVLHAGH). Positions 647–651 (KLSKS) match the 'KMSKS' region motif. Residue K650 coordinates ATP.

The protein belongs to the class-I aminoacyl-tRNA synthetase family.

The protein resides in the cytoplasm. The enzyme catalyses tRNA(Leu) + L-leucine + ATP = L-leucyl-tRNA(Leu) + AMP + diphosphate. The sequence is that of Leucine--tRNA ligase from Methanococcus maripaludis (strain DSM 14266 / JCM 13030 / NBRC 101832 / S2 / LL).